A 296-amino-acid polypeptide reads, in one-letter code: Sulfotransferase 1B1 (296 aa).

48–53 (KSGTTW) contributes to the 3'-phosphoadenylyl sulfate binding site. 107-109 (KTH) contacts substrate. Catalysis depends on His109, which acts as the Proton acceptor. 3'-phosphoadenylyl sulfate contacts are provided by residues Arg131, Ser139, Tyr194, 228–233 (TSFEMM), and 258–260 (RKG).

Belongs to the sulfotransferase 1 family. Expressed highly in the colon, kidney and small intestine of male and female dogs. Highly expressed in the jejunum and ileum of the male dog than the female dog, which displayed more expression in duodenum (at protein level).

The protein localises to the cytoplasm. The enzyme catalyses a phenol + 3'-phosphoadenylyl sulfate = an aryl sulfate + adenosine 3',5'-bisphosphate + H(+). The catalysed reaction is 3,3',5-triiodo-L-thyronine + 3'-phosphoadenylyl sulfate = 3,3',5-triiodo-L-thyronine sulfate + adenosine 3',5'-bisphosphate + H(+). It catalyses the reaction 3,3',5'-triiodo-L-thyronine + 3'-phosphoadenylyl sulfate = 3,3',5'-triiodo-L-thyronine sulfate + adenosine 3',5'-bisphosphate + H(+). It carries out the reaction 3,3'-diiodo-L-thyronine + 3'-phosphoadenylyl sulfate = 3,3'-diiodo-L-thyronine sulfate + adenosine 3',5'-bisphosphate + H(+). The enzyme catalyses 4-ethylphenol + 3'-phosphoadenylyl sulfate = 4-ethylphenyl sulfate + adenosine 3',5'-bisphosphate + H(+). Sulfotransferase that utilizes 3'-phospho-5'-adenylyl sulfate (PAPS) as sulfonate donor to catalyze the sulfate conjugation of dopamine, small phenols such as 1-naphthol and p-nitrophenol and thyroid hormones, including 3,3'-diiodothyronine, triidothyronine (T3) and reverse triiodothyronine (rT3). May play a role in gut microbiota-host metabolic interaction. O-sulfonates 4-ethylphenol (4-EP), a dietary tyrosine-derived metabolite produced by gut bacteria. The product 4-EPS crosses the blood-brain barrier and may negatively regulate oligodendrocyte maturation and myelination, affecting the functional connectivity of different brain regions associated with the limbic system. The sequence is that of Sulfotransferase 1B1 (SULT1B1) from Canis lupus familiaris (Dog).